Here is a 244-residue protein sequence, read N- to C-terminus: Uridylate kinase (244 aa).

15-18 contacts ATP; it reads KLSG. Positions 23-28 are involved in allosteric activation by GTP; it reads GSEGFG. Gly-57 is a binding site for UMP. Gly-58 and Arg-62 together coordinate ATP. UMP is bound by residues Asp-77 and 138 to 145; that span reads TGNPFFTT. Residues Thr-165, Phe-171, and Asp-174 each coordinate ATP.

This sequence belongs to the UMP kinase family. In terms of assembly, homohexamer.

The protein resides in the cytoplasm. The catalysed reaction is UMP + ATP = UDP + ADP. The protein operates within pyrimidine metabolism; CTP biosynthesis via de novo pathway; UDP from UMP (UMPK route): step 1/1. With respect to regulation, allosterically activated by GTP. Inhibited by UTP. In terms of biological role, catalyzes the reversible phosphorylation of UMP to UDP. In Aeromonas salmonicida (strain A449), this protein is Uridylate kinase.